Reading from the N-terminus, the 440-residue chain is Argininosuccinate lyase (440 aa).

It belongs to the lyase 1 family. Argininosuccinate lyase subfamily.

It is found in the cytoplasm. It carries out the reaction 2-(N(omega)-L-arginino)succinate = fumarate + L-arginine. The protein operates within amino-acid biosynthesis; L-arginine biosynthesis; L-arginine from L-ornithine and carbamoyl phosphate: step 3/3. The protein is Argininosuccinate lyase of Clostridium botulinum (strain Kyoto / Type A2).